We begin with the raw amino-acid sequence, 98 residues long: DNA-binding protein Fis (98 aa).

The segment at residues 74–93 is a DNA-binding region (H-T-H motif); sequence QTKAANMMGINRGTLRKKLK.

Belongs to the transcriptional regulatory Fis family. In terms of assembly, homodimer.

Functionally, activates ribosomal RNA transcription. Plays a direct role in upstream activation of rRNA promoters. This Aliivibrio fischeri (strain ATCC 700601 / ES114) (Vibrio fischeri) protein is DNA-binding protein Fis.